Reading from the N-terminus, the 429-residue chain is UDP-N-acetylglucosamine 1-carboxyvinyltransferase (429 aa).

Lys-22 to Asn-23 contacts phosphoenolpyruvate. UDP-N-acetyl-alpha-D-glucosamine is bound at residue Arg-102. The active-site Proton donor is Cys-126. At Cys-126 the chain carries 2-(S-cysteinyl)pyruvic acid O-phosphothioketal. Residues Arg-131 to Leu-135, Asp-316, and Ile-338 each bind UDP-N-acetyl-alpha-D-glucosamine.

Belongs to the EPSP synthase family. MurA subfamily.

The protein localises to the cytoplasm. The catalysed reaction is phosphoenolpyruvate + UDP-N-acetyl-alpha-D-glucosamine = UDP-N-acetyl-3-O-(1-carboxyvinyl)-alpha-D-glucosamine + phosphate. It participates in cell wall biogenesis; peptidoglycan biosynthesis. Cell wall formation. Adds enolpyruvyl to UDP-N-acetylglucosamine. This Rhodopseudomonas palustris (strain BisA53) protein is UDP-N-acetylglucosamine 1-carboxyvinyltransferase.